Consider the following 264-residue polypeptide: Indole-3-glycerol phosphate synthase (264 aa).

This sequence belongs to the TrpC family.

The enzyme catalyses 1-(2-carboxyphenylamino)-1-deoxy-D-ribulose 5-phosphate + H(+) = (1S,2R)-1-C-(indol-3-yl)glycerol 3-phosphate + CO2 + H2O. The protein operates within amino-acid biosynthesis; L-tryptophan biosynthesis; L-tryptophan from chorismate: step 4/5. This is Indole-3-glycerol phosphate synthase from Stenotrophomonas maltophilia (strain K279a).